Here is a 635-residue protein sequence, read N- to C-terminus: Extracellular metalloproteinase MEP (635 aa).

The signal sequence occupies residues 1–19; that stretch reads MRAFLLASLASLPAVNVYA. Residues 20–244 constitute a propeptide that is removed on maturation; it reads HPTHNSRGLT…VHAVVDYAAE (225 aa). Asparagine 287, asparagine 302, and asparagine 336 each carry an N-linked (GlcNAc...) asparagine glycan. Histidine 429 provides a ligand contact to Zn(2+). The active site involves glutamate 430. Histidine 433 lines the Zn(2+) pocket.

It belongs to the peptidase M36 family. Zn(2+) is required as a cofactor.

It is found in the secreted. Functionally, secreted metalloproteinase that allows assimilation of proteinaceous substrates. The polypeptide is Extracellular metalloproteinase MEP (MEP) (Leptosphaeria maculans (strain JN3 / isolate v23.1.3 / race Av1-4-5-6-7-8) (Blackleg fungus)).